The chain runs to 256 residues: DNA repair protein RecO (256 aa).

It belongs to the RecO family.

Functionally, involved in DNA repair and RecF pathway recombination. The polypeptide is DNA repair protein RecO (Pelotomaculum thermopropionicum (strain DSM 13744 / JCM 10971 / SI)).